The chain runs to 404 residues: Mitochondrial intermembrane space import and assembly protein 40 (404 aa).

The N-terminal 34 residues, 1–34 (MVSAVSRQLVNRQLNRVLLRNARIAPFARATRFY), are a transit peptide targeting the mitochondrion. Residues 35–50 (SSKYAQESENAKRHKM) lie on the Mitochondrial matrix side of the membrane. Residues 51 to 71 (GLLIAGVAVAGAIVFVTPPQW) form a helical; Signal-anchor for type II membrane protein membrane-spanning segment. The Mitochondrial intermembrane portion of the chain corresponds to 72–404 (KKYFRAAKKV…PDEDTASKKD (333 aa)). The interval 84-287 (VAESKEDPVS…SAYNPDTGEI (204 aa)) is disordered. A compositionally biased stretch (low complexity) spans 101 to 113 (ESVQESTEEPQQS). The segment covering 124–135 (EQAQDESASSGD) has biased composition (polar residues). Basic and acidic residues-rich tracts occupy residues 136-156 (SEAKKAHDEFADQNEASEKES), 226-237 (EEDKTPKAEELK), and 246-276 (EEPKKEDDSSKTIHSLNSEKDMEAVEEEVKQ). Cystine bridges form between Cys291–Cys293, Cys302–Cys335, and Cys312–Cys325. In terms of domain architecture, CHCH spans 299 to 343 (HGPCGEEFKAAFSCFVYSEAEPKGIDCVEKFQHMQDCFRRYPEHY). 2 consecutive short sequence motifs (cx9C motif) follow at residues 302–312 (CGEEFKAAFSC) and 325–335 (CVEKFQHMQDC). Positions 346 to 404 (QLADPADDENVDHEKNLSEGKDTGVDSTPPKDEAYLKTEKEKKIEENASPDEDTASKKD) are disordered. The segment covering 357–391 (DHEKNLSEGKDTGVDSTPPKDEAYLKTEKEKKIEE) has biased composition (basic and acidic residues).

In terms of assembly, monomer. The cofactor is Cu(2+). Zn(2+) is required as a cofactor.

It localises to the mitochondrion inner membrane. In terms of biological role, required for the import and folding of small cysteine-containing proteins (small Tim) in the mitochondrial intermembrane space (IMS). Forms a redox cycle with ERV1 that involves a disulfide relay system. Precursor proteins to be imported into the IMS are translocated in their reduced form into the mitochondria. The oxidized form of MIA40 forms a transient intermolecular disulfide bridge with the reduced precursor protein, resulting in oxidation of the precursor protein that now contains an intramolecular disulfide bond and is able to undergo folding in the IMS. The polypeptide is Mitochondrial intermembrane space import and assembly protein 40 (MIA40) (Candida glabrata (strain ATCC 2001 / BCRC 20586 / JCM 3761 / NBRC 0622 / NRRL Y-65 / CBS 138) (Yeast)).